An 801-amino-acid polypeptide reads, in one-letter code: Protein SDA1 homolog (801 aa).

4 disordered regions span residues M1–F40, R495–P517, G536–S647, and D739–Q801. The segment covering K24–F40 has biased composition (polar residues). Composition is skewed to acidic residues over residues D544–E568 and N583–E633. Basic residues-rich tracts occupy residues N770–R779 and S787–Q801.

The protein belongs to the SDA1 family.

It is found in the nucleus. In terms of biological role, required for 60S pre-ribosomal subunits export to the cytoplasm. Required for normal somatic gonad development and for regulation of germline development and proliferation. The chain is Protein SDA1 homolog (pro-3) from Caenorhabditis elegans.